A 407-amino-acid polypeptide reads, in one-letter code: BMP-like protein unc-129 (407 aa).

The signal sequence occupies residues 1-18 (MRRLPIVLLLSVFSIANC). Residues asparagine 27, asparagine 42, and asparagine 211 are each glycosylated (N-linked (GlcNAc...) asparagine). The segment at 252 to 283 (DDREPIKRKNGKKNSLSEEISSEDVWQGFGEE) is disordered. The N-linked (GlcNAc...) asparagine glycan is linked to asparagine 395.

It belongs to the TGF-beta family. As to quaternary structure, interacts with netrin receptor unc-5; the interaction is direct.

It localises to the secreted. The protein localises to the extracellular space. Required for the migration of axonal growth-cones and distal tip cells (DTC) along the dorsal-ventral axis of the body wall. Acts cell nonautonomously and independently of the classical daf-4, sma-6 or daf-1 TGFbeta receptor signaling. During axon migration, facilitates long-range repulsive guidance of unc-6/netrin by enhancing unc-5-unc-40 signaling at the expense of unc-5 alone signaling, probably through direct interaction with receptor unc-5. Involved in cell-cell contact formation in sensory rays in the developing male tail, via a pathway involving plx-2 and mab-20/semaphorin-2A. The protein is BMP-like protein unc-129 of Caenorhabditis elegans.